A 111-amino-acid chain; its full sequence is Aspartate 1-decarboxylase (111 aa).

Ser25 functions as the Schiff-base intermediate with substrate; via pyruvic acid in the catalytic mechanism. A Pyruvic acid (Ser) modification is found at Ser25. Thr57 serves as a coordination point for substrate. Residue Tyr58 is the Proton donor of the active site. 73–75 (GPA) contributes to the substrate binding site.

It belongs to the PanD family. In terms of assembly, heterooctamer of four alpha and four beta subunits. Pyruvate serves as cofactor. In terms of processing, is synthesized initially as an inactive proenzyme, which is activated by self-cleavage at a specific serine bond to produce a beta-subunit with a hydroxyl group at its C-terminus and an alpha-subunit with a pyruvoyl group at its N-terminus.

It is found in the cytoplasm. The catalysed reaction is L-aspartate + H(+) = beta-alanine + CO2. It participates in cofactor biosynthesis; (R)-pantothenate biosynthesis; beta-alanine from L-aspartate: step 1/1. Functionally, catalyzes the pyruvoyl-dependent decarboxylation of aspartate to produce beta-alanine. The sequence is that of Aspartate 1-decarboxylase from Francisella tularensis subsp. holarctica (strain LVS).